A 203-amino-acid polypeptide reads, in one-letter code: Recombination protein RecR (203 aa).

The C4-type zinc-finger motif lies at 58–73 (CDYCGNLDIVSICNIC). Residues 81 to 177 (STIAVVESVA…KISKLASGIP (97 aa)) enclose the Toprim domain.

Belongs to the RecR family.

In terms of biological role, may play a role in DNA repair. It seems to be involved in an RecBC-independent recombinational process of DNA repair. It may act with RecF and RecO. In Orientia tsutsugamushi (strain Ikeda) (Rickettsia tsutsugamushi), this protein is Recombination protein RecR.